The following is a 781-amino-acid chain: 5-methyltetrahydropteroyltriglutamate--homocysteine methyltransferase (781 aa).

5-methyltetrahydropteroyltri-L-glutamate contacts are provided by residues 20 to 23 (RELK) and Lys131. Residues 453 to 455 (IGS) and Glu506 contribute to the L-homocysteine site. L-methionine contacts are provided by residues 453 to 455 (IGS) and Glu506. 5-methyltetrahydropteroyltri-L-glutamate-binding positions include 537–538 (RC) and Trp583. Residue Asp621 coordinates L-homocysteine. L-methionine is bound at residue Asp621. Glu627 provides a ligand contact to 5-methyltetrahydropteroyltri-L-glutamate. The Zn(2+) site is built by His663, Cys665, and Glu687. Catalysis depends on His716, which acts as the Proton donor. Cys748 is a Zn(2+) binding site.

The protein belongs to the vitamin-B12 independent methionine synthase family. Zn(2+) serves as cofactor.

It carries out the reaction 5-methyltetrahydropteroyltri-L-glutamate + L-homocysteine = tetrahydropteroyltri-L-glutamate + L-methionine. The protein operates within amino-acid biosynthesis; L-methionine biosynthesis via de novo pathway; L-methionine from L-homocysteine (MetE route): step 1/1. Functionally, catalyzes the transfer of a methyl group from 5-methyltetrahydrofolate to homocysteine resulting in methionine formation. The chain is 5-methyltetrahydropteroyltriglutamate--homocysteine methyltransferase from Bradyrhizobium diazoefficiens (strain JCM 10833 / BCRC 13528 / IAM 13628 / NBRC 14792 / USDA 110).